Reading from the N-terminus, the 347-residue chain is Protein XRP2 (347 aa).

Over residues 1–11 the composition is skewed to basic residues; that stretch reads MGCCFTKRRKS. The disordered stretch occupies residues 1–22; that stretch reads MGCCFTKRRKSEKAEGEEEQPK. The N-myristoyl glycine moiety is linked to residue glycine 2. Cysteine 3 carries the S-palmitoyl cysteine lipid modification. The C-CAP/cofactor C-like domain occupies 21–176; sequence PKLYSWDQRE…IWSHVHDFTP (156 aa). GTP-binding positions include 95–96 and 112–115; these read GS and QQFR.

This sequence belongs to the TBCC family. As to quaternary structure, found in a complex with ARL3, RP2 and UNC119 (or UNC119B); RP2 induces hydrolysis of GTP ARL3 in the complex, leading to the release of UNC119 (or UNC119B). Interacts with ARL3; interaction is direct and stimulated with the activated GTP-bound form of ARL3. Post-translationally, myristoylated on Gly-2; which may be required for membrane targeting. In terms of processing, palmitoylated on Cys-3; which may be required for plasma membrane targeting. In terms of tissue distribution, retina (at protein level).

It localises to the cell membrane. The protein resides in the cell projection. It is found in the cilium. In terms of biological role, acts as a GTPase-activating protein (GAP) involved in trafficking between the Golgi and the ciliary membrane. Involved in localization of proteins, such as NPHP3, to the cilium membrane by inducing hydrolysis of GTP ARL3, leading to the release of UNC119 (or UNC119B). Acts as a GTPase-activating protein (GAP) for tubulin in concert with tubulin-specific chaperone C, but does not enhance tubulin heterodimerization. Acts as a guanine nucleotide dissociation inhibitor towards ADP-ribosylation factor-like proteins. The chain is Protein XRP2 (Rp2) from Mus musculus (Mouse).